Here is a 763-residue protein sequence, read N- to C-terminus: MAP7 domain-containing protein 2 (763 aa).

Over residues Met-1–Thr-11 the composition is skewed to gly residues. Disordered stretches follow at residues Met-1–Arg-63, Trp-96–Glu-124, Ser-149–Lys-268, and Pro-300–Glu-540. Positions Ser-52–Arg-63 are enriched in basic and acidic residues. Positions Glu-54–Lys-147 form a coiled coil. A compositionally biased stretch (polar residues) spans Glu-192–Ser-206. 3 stretches are compositionally biased toward basic and acidic residues: residues Met-355–Gly-371, Ala-385–Ala-400, and Leu-430–Glu-540.

It belongs to the MAP7 family. Interacts (via N-terminus) with microtubules; facilitates microtubule stabilization. Interacts with kinesin-1 family members, KIF5A, KIF5B and KIF5C.

The protein localises to the cytoplasm. It localises to the cytoskeleton. Its subcellular location is the microtubule organizing center. The protein resides in the centrosome. It is found in the midbody. The protein localises to the cell projection. It localises to the neuron projection. Its subcellular location is the axon. Microtubule-stabilizing protein involved in the control of cell motility and neurite outgrowth. Acts as a critical cofactor for kinesin transport; in the proximal axon regulates kinesin-1 family members, KIF5A, KIF5B and KIF5C recruitment to microtubules and contributes to kinesin-1-mediated transport in the axons. The polypeptide is MAP7 domain-containing protein 2 (MAP7D2) (Pongo abelii (Sumatran orangutan)).